Reading from the N-terminus, the 347-residue chain is MTEQKRPLTYRDAGVDIDAGNELVKRIAPVAKRTRRPEVLGGLGGFGALCELPTKYKNPVLVAGTDGVGTKLRLAIDHNRHEKVGVDLVAMCVNDLIVGGAEPLFFLDYYATGKLDVEIATSVVTGIGEGCELAGCALIGGETAEMPGMYEGEDYDLAGFCVGVVEKDGVLDGSKVEAGDKLIGLGASGPHSNGYSLIRRIMAQAETDIDLDGKPLIEHLLEPTRIYVKSLLKLIEQVPVHAMAHITGGGLPENLPRVLPDNTRAVIDTKSWEFPAVFQWLQQEGQVPAFEMYRTFNCGVGMVIAVPASHVDDALALLEAEGESAFLIGEIQAGDGQPDVVLDGLSA.

The protein belongs to the AIR synthase family.

It localises to the cytoplasm. It catalyses the reaction 2-formamido-N(1)-(5-O-phospho-beta-D-ribosyl)acetamidine + ATP = 5-amino-1-(5-phospho-beta-D-ribosyl)imidazole + ADP + phosphate + H(+). Its pathway is purine metabolism; IMP biosynthesis via de novo pathway; 5-amino-1-(5-phospho-D-ribosyl)imidazole from N(2)-formyl-N(1)-(5-phospho-D-ribosyl)glycinamide: step 2/2. In Alcanivorax borkumensis (strain ATCC 700651 / DSM 11573 / NCIMB 13689 / SK2), this protein is Phosphoribosylformylglycinamidine cyclo-ligase.